Here is a 292-residue protein sequence, read N- to C-terminus: Acetylglutamate kinase (292 aa).

Substrate is bound by residues 64–65, R86, and N190; that span reads GG.

The protein belongs to the acetylglutamate kinase family. ArgB subfamily.

The protein localises to the cytoplasm. The enzyme catalyses N-acetyl-L-glutamate + ATP = N-acetyl-L-glutamyl 5-phosphate + ADP. It functions in the pathway amino-acid biosynthesis; L-arginine biosynthesis; N(2)-acetyl-L-ornithine from L-glutamate: step 2/4. Its function is as follows. Catalyzes the ATP-dependent phosphorylation of N-acetyl-L-glutamate. The polypeptide is Acetylglutamate kinase (Citrifermentans bemidjiense (strain ATCC BAA-1014 / DSM 16622 / JCM 12645 / Bem) (Geobacter bemidjiensis)).